Here is a 489-residue protein sequence, read N- to C-terminus: Beta-1,3-glucosyltransferase (489 aa).

Residue methionine 1 is a topological domain, cytoplasmic. A helical; Signal-anchor for type II membrane protein transmembrane segment spans residues 2–22 (RPPALLALFSCSAAFALMSEE). Residues 23 to 489 (IKEKVTPSQD…ETQKDPREEL (467 aa)) lie on the Lumenal side of the membrane. The N-linked (GlcNAc...) asparagine glycan is linked to asparagine 78. The Prevents secretion from ER motif lies at 486–489 (REEL).

This sequence belongs to the glycosyltransferase 31 family.

It localises to the endoplasmic reticulum membrane. Its pathway is protein modification; protein glycosylation. Functionally, O-glucosyltransferase that transfers glucose toward fucose with a beta-1,3 linkage. Specifically glucosylates O-linked fucosylglycan on TSP type-1 domains of proteins, thereby contributing to elongation of O-fucosylglycan. The chain is Beta-1,3-glucosyltransferase from Mus musculus (Mouse).